An 842-amino-acid chain; its full sequence is ATP-binding cassette sub-family B member 6 (842 aa).

Residues 1-26 (MVTVGNYCEAEGPVGPAWMQDGLSPC) are Lumenal-facing. The tract at residues 1–205 (MVTVGNYCEA…SGGLFVLGLW (205 aa)) is required for the lysosomal targeting. Residues 1–236 (MVTVGNYCEA…RSQVRSAAQQ (236 aa)) are required for ATPase activity. N-linked (GlcNAc...) asparagine glycosylation is present at Asn-6. An intrachain disulfide couples Cys-8 to Cys-26. Residues 27-47 (FFFTLVPSTRMALGTLALVLA) traverse the membrane as a helical segment. Over 48–72 (LPCRRRERPAGADSLSWGAGPRISP) the chain is Cytoplasmic. Residues 73–93 (YVLQLLLATLQAALPLAGLAG) traverse the membrane as a helical segment. The Lumenal portion of the chain corresponds to 94 to 106 (RVGTARGAPLPSY). The chain crosses the membrane as a helical span at residues 107–127 (LLLASVLESLAGACGLWLLVV). Residues 128–147 (ERSQARQRLAMGIWIKFRHS) lie on the Cytoplasmic side of the membrane. A helical membrane pass occupies residues 148-168 (PGLLLLWTVAFAAENLALVSW). Residues 169-185 (NSPQWWWARADLGQQVQ) lie on the Lumenal side of the membrane. Residues 186 to 206 (FSLWVLRYVVSGGLFVLGLWA) form a helical membrane-spanning segment. The Cytoplasmic portion of the chain corresponds to 207 to 263 (PGLRPQSYTLQVHEEDQDVERSQVRSAAQQSTWRDFGRKLRLLSGYLWPRGSPALQL). Residues 264 to 284 (VVLICLGLMGLERALNVLVPI) form a helical membrane-spanning segment. Residues 265 to 556 (VLICLGLMGL…FGTYYRMIQT (292 aa)) enclose the ABC transmembrane type-1 domain. The Lumenal portion of the chain corresponds to 285–291 (FYRNIVN). The helical transmembrane segment at 292–312 (LLTEKAPWNSLAWTVTSYVFL) threads the bilayer. The Cytoplasmic portion of the chain corresponds to 313-375 (KFLQGGGTGS…TGEVLRIADR (63 aa)). A helical membrane pass occupies residues 376–396 (GTSSVTGLLSYLVFNVIPTLA). Position 397 (Asp-397) is a topological domain, lumenal. The chain crosses the membrane as a helical span at residues 398 to 418 (IIIGIIYFSMFFNAWFGLIVF). Residues 419-499 (LCMSLYLTLT…SSASLVLLNQ (81 aa)) are Cytoplasmic-facing. The chain crosses the membrane as a helical span at residues 500-520 (TQNLVIGLGLLAGSLLCAYFV). The Lumenal portion of the chain corresponds to 521–529 (TEQKLQVGD). Residues 530–550 (YVLFGTYIIQLYMPLNWFGTY) traverse the membrane as a helical segment. The Cytoplasmic portion of the chain corresponds to 551–842 (YRMIQTNFID…EDTKPQTMER (292 aa)). An ABC transporter domain is found at 590-824 (IEFENVHFSY…GGVYADMWQL (235 aa)). ATP contacts are provided by residues Tyr-599 and 623–634 (GPSGAGKSTILR).

Belongs to the ABC transporter superfamily. ABCB family. Heavy Metal importer (TC 3.A.1.210) subfamily. Homodimer. In terms of processing, N-glycosylated. As to expression, widely expressed. High expression is detected in the retinal epithelium. Expressed in mature erythrocytes.

Its subcellular location is the cell membrane. The protein localises to the mitochondrion outer membrane. It localises to the endoplasmic reticulum membrane. The protein resides in the golgi apparatus membrane. It is found in the endosome membrane. Its subcellular location is the lysosome membrane. The protein localises to the late endosome membrane. It localises to the early endosome membrane. The protein resides in the secreted. It is found in the extracellular exosome. Its subcellular location is the mitochondrion. The protein localises to the endosome. It localises to the multivesicular body membrane. The protein resides in the melanosome membrane. The catalysed reaction is heme b(in) + ATP + H2O = heme b(out) + ADP + phosphate + H(+). It catalyses the reaction coproporphyrin III(in) + ATP + H2O = coproporphyrin III(out) + ADP + phosphate + H(+). The enzyme catalyses pheophorbide a(in) + ATP + H2O = pheophorbide a(out) + ADP + phosphate + H(+). It carries out the reaction coproporphyrinogen III(in) + ATP + H2O = coproporphyrinogen III(out) + ADP + phosphate + H(+). The catalysed reaction is protoporphyrin IX(in) + ATP + H2O = protoporphyrin IX(out) + ADP + phosphate + H(+). It catalyses the reaction coproporphyrin I(in) + ATP + H2O = coproporphyrin I(out) + ADP + phosphate + H(+). The enzyme catalyses uroporphyrin I(in) + ATP + H2O = uroporphyrin I(out) + ADP + phosphate + H(+). It carries out the reaction uroporphyrin III(in) + ATP + H2O = uroporphyrin III(out) + ADP + phosphate + H(+). With respect to regulation, ATPase activity is inhibited by MgATP with an IC(50) of 1.03 mM and up-regulated by coporphyrin III&gt; hemin &gt; protoporphyrin IX. ATPase activity for hemin is up-regulated by glutathione. The ATPase activity is impaired by increasing copper concentrations (0-300 uM). The ATPase activity is stimulated in presence of glutathione for increasing copper concentrations (0-300 uM). Functionally, ATP-dependent transporter that catalyzes the transport of a broad-spectrum of porphyrins from the cytoplasm to the extracellular space through the plasma membrane or into the vesicle lumen. May also function as an ATP-dependent importer of porphyrins from the cytoplasm into the mitochondria, in turn may participate in the de novo heme biosynthesis regulation and in the coordination of heme and iron homeostasis during phenylhydrazine stress. May also play a key role in the early steps of melanogenesis producing PMEL amyloid fibrils. In vitro, it confers to cells a resistance to toxic metal such as arsenic and cadmium and against chemotherapeutics agent such as 5-fluorouracil, SN-38 and vincristin. In addition may play a role in the transition metal homeostasis. In Homo sapiens (Human), this protein is ATP-binding cassette sub-family B member 6.